The following is a 568-amino-acid chain: Protein yellow (568 aa).

A signal peptide spans 1 to 28 (MHAQDKGGILPALSLLLIAVAMVSPSQA). Residues asparagine 151 and asparagine 222 are each glycosylated (N-linked (GlcNAc...) asparagine).

Belongs to the major royal jelly protein family.

The protein localises to the secreted. Controls the pigmentation pattern of the adult cuticle and larval mouth parts. This Drosophila subobscura (Fruit fly) protein is Protein yellow (y).